The following is a 1893-amino-acid chain: Transcription initiation factor TFIID subunit 1 (1893 aa).

Positions 1 to 435 (MGPGCDLLLR…VTQLHWEDDI (435 aa)) constitute a Protein kinase 1 domain. Ser137 is subject to Phosphoserine; by autocatalysis. Disordered regions lie at residues 155 to 184 (LMPPPPPPPGPMKKDKDQDSITGVSENGEG) and 197 to 224 (ASEKVDFSSSSDSESEMGPQEATQAESE). Residues 156 to 165 (MPPPPPPPGP) show a composition bias toward pro residues. A compositionally biased stretch (low complexity) spans 197-208 (ASEKVDFSSSSD). Ser328 carries the post-translational modification Phosphoserine; by autocatalysis. A disordered region spans residues 534–557 (IPDEKEEATSNSPSKESKKESSLK). A histone acetyltransferase (HAT) region spans residues 538–997 (KEEATSNSPS…KIPNKPTQQK (460 aa)). Lys565 carries the post-translational modification N6-acetyllysine. Glycyl lysine isopeptide (Lys-Gly) (interchain with G-Cter in SUMO2) cross-links involve residues Lys570 and Lys583. 4 disordered regions span residues 990-1009 (PNKPTQQKDDKEPQPVKKTV), 1128-1148 (MLQNKKTSSQLSREREEQERK), 1158-1177 (GSAASGNNHRDDDTASVTSL), and 1254-1278 (RLKRNQEKEKLKGPPEKKPKKMKER). Composition is skewed to basic and acidic residues over residues 995-1004 (QQKDDKEPQP) and 1139-1148 (SREREEQERK). The HMG box; involved in promoter binding DNA-binding region spans 1216-1294 (VRIRTTKDEE…CGACGAIGHM (79 aa)). The segment covering 1254-1270 (RLKRNQEKEKLKGPPEK) has biased composition (basic and acidic residues). The segment at 1363–1650 (VLKFPKQQLP…TAKEAALEEA (288 aa)) is interaction with ASF1A and ASF1B. Positions 1372–1379 (PPKKKRRV) match the Nuclear localization signal motif. Bromo domains lie at 1397 to 1505 (RRRT…LKEK) and 1519 to 1628 (LLDD…LTEY). In terms of domain architecture, Protein kinase 2 spans 1446–1893 (MDLQTLRENV…AGDSDLDSDE (448 aa)). Positions 1651-1676 (ELESLDPMTPGPYTPQPPDLYDTNTS) are disordered. Residues 1659–1668 (TPGPYTPQPP) show a composition bias toward pro residues. A phosphoserine mark is found at Ser1690, Ser1693, Ala1718, Glu1721, and Gly1723. The segment at 1696-1893 (DIPSATPEKQ…AGDSDLDSDE (198 aa)) is disordered. 2 stretches are compositionally biased toward acidic residues: residues 1709–1723 (EGEDGDGDLADEEEG) and 1741–1756 (EGEDDEEDAGSDEEGD). Residues Ser1799, Ser1802, and Ser1820 each carry the phosphoserine modification. The segment covering 1830 to 1840 (KSNTQDTSFSS) has biased composition (polar residues). Residues 1846 to 1857 (VSEEEEDEEEEE) are compositionally biased toward acidic residues. Ser1847 carries the post-translational modification Phosphoserine. The span at 1860–1869 (SGPSVLSQVH) shows a compositional bias: polar residues.

This sequence belongs to the TAF1 family. As to quaternary structure, component of the TFIID basal transcription factor complex, composed of TATA-box-binding protein TBP, and a number of TBP-associated factors (TAFs), including TAF1, TAF2, TAF3, TAF4, TAF5, TAF6, TAF7, TAF8, TAF9, TAF10, TAF11, TAF12 and TAF13. Interacts with TAF7; the interaction is direct. TAF1, when part of the TFIID complex, interacts with C-terminus of TP53. Part of a TFIID-containing RNA polymerase II pre-initiation complex that is composed of TBP and at least GTF2A1, GTF2A2, GTF2E1, GTF2E2, GTF2F1, GTF2H2, GTF2H3, GTF2H4, GTF2H5, GTF2B, TCEA1, ERCC2, ERCC3, TAF1, TAF2, TAF3, TAF4, TAF5, TAF6, TAF7, TAF8, TAF9, TAF10, TAF11, TAF12 and TAF13. Component of some MLL1/MLL complex, at least composed of the core components KMT2A/MLL1, ASH2L, HCFC1/HCF1, WDR5 and RBBP5, as well as the facultative components BACC1, CHD8, E2F6, HSP70, INO80C, KANSL1, LAS1L, MAX, MCRS1, MGA, KAT8/MOF, PELP1, PHF20, PRP31, RING2, RUVB1/TIP49A, RUVB2/TIP49B, SENP3, TAF1, TAF4, TAF6, TAF7, TAF9 and TEX10. RB1 interacts with the N-terminal domain of TAF1. Interacts with ASF1A and ASF1B. Interacts (via bromo domains) with acetylated lysine residues on the N-terminus of histone H1.4, H2A, H2B, H3 and H4 (in vitro). (Microbial infection) Interacts with SV40 Large T antigen. In terms of assembly, (Microbial infection) Interacts with herpes simplex virus 1 ICP4. Requires Mg(2+) as cofactor. In terms of processing, phosphorylated by casein kinase II in vitro.

The protein localises to the nucleus. The catalysed reaction is L-seryl-[protein] + ATP = O-phospho-L-seryl-[protein] + ADP + H(+). The enzyme catalyses L-threonyl-[protein] + ATP = O-phospho-L-threonyl-[protein] + ADP + H(+). It carries out the reaction L-lysyl-[protein] + acetyl-CoA = N(6)-acetyl-L-lysyl-[protein] + CoA + H(+). With respect to regulation, autophosphorylates on Ser residues. Inhibited by retinoblastoma tumor suppressor protein, RB1. Binding to TAF7 or CIITA inhibits the histone acetyltransferase activity. The TFIID basal transcription factor complex plays a major role in the initiation of RNA polymerase II (Pol II)-dependent transcription. TFIID recognizes and binds promoters with or without a TATA box via its subunit TBP, a TATA-box-binding protein, and promotes assembly of the pre-initiation complex (PIC). The TFIID complex consists of TBP and TBP-associated factors (TAFs), including TAF1, TAF2, TAF3, TAF4, TAF5, TAF6, TAF7, TAF8, TAF9, TAF10, TAF11, TAF12 and TAF13. TAF1 is the largest component and core scaffold of the TFIID complex, involved in nucleating complex assembly. TAF1 forms a promoter DNA binding subcomplex of TFIID, together with TAF7 and TAF2. Contains novel N- and C-terminal Ser/Thr kinase domains which can autophosphorylate or transphosphorylate other transcription factors. Phosphorylates TP53 on 'Thr-55' which leads to MDM2-mediated degradation of TP53. Phosphorylates GTF2A1 and GTF2F1 on Ser residues. Possesses DNA-binding activity. Essential for progression of the G1 phase of the cell cycle. Exhibits histone acetyltransferase activity towards histones H3 and H4. This chain is Transcription initiation factor TFIID subunit 1, found in Homo sapiens (Human).